Consider the following 819-residue polypeptide: Pentatricopeptide repeat-containing protein At1g52620 (819 aa).

PPR repeat units follow at residues 98–132, 133–163, 169–203, 204–238, 239–273, 274–308, 309–343, 344–378, 379–413, 414–448, 449–483, 484–518, 519–553, 554–588, 589–623, 624–659, 709–743, and 744–779; these read NGFA…NVKL, THEA…VVEL, DVIA…GDSV, DNYS…GCIP, NIVF…GFMP, TLET…GLRV, SVWF…DCKP, DVAT…GLIP, NNLS…GCKP, DIVT…GVSP, DAAI…NILP, DAYV…GVKV, DVVH…HLVP, DKFT…KCKP, NVVT…DLVP, NVVT…KCVP, HAAA…GFSP, and DPVS…GLEV.

Belongs to the PPR family. P subfamily.

The polypeptide is Pentatricopeptide repeat-containing protein At1g52620 (Arabidopsis thaliana (Mouse-ear cress)).